We begin with the raw amino-acid sequence, 126 residues long: Nuclear transport factor 2B (126 aa).

S2 carries the N-acetylserine modification. One can recognise an NTF2 domain in the interval V9 to L123.

As to quaternary structure, interacts with RAN1. As to expression, expressed in roots, stems, leaves and flowers, and, at low levels, in siliques.

It localises to the cytoplasm. The protein localises to the nucleus. The protein resides in the nucleus envelope. Functionally, facilitates protein transport into the nucleus. Interacts with various nucleoporins and with Ran-GDP. Could be part of a multicomponent system of cytosolic factors that assemble at the pore complex during nuclear import. The sequence is that of Nuclear transport factor 2B from Arabidopsis thaliana (Mouse-ear cress).